Reading from the N-terminus, the 472-residue chain is F420-non-reducing hydrogenase subunit A (472 aa).

The Ni(2+) site is built by Cys-61, Cys-64, Cys-442, and Cys-445.

It belongs to the [NiFe]/[NiFeSe] hydrogenase large subunit family. The F420-non-reducing hydrogenase is composed of three subunits; MvhA, MvhD and MvhG. It forms a complex with the heterodisulfide reductase (hdr). Requires Ni(2+) as cofactor.

Part of a complex that provides reducing equivalents for heterodisulfide reductase. The protein is F420-non-reducing hydrogenase subunit A (mvhA) of Methanothermobacter thermautotrophicus (strain ATCC 29096 / DSM 1053 / JCM 10044 / NBRC 100330 / Delta H) (Methanobacterium thermoautotrophicum).